The chain runs to 117 residues: Large ribosomal subunit protein uL24 (117 aa).

A compositionally biased stretch (polar residues) spans 1–12; sequence MSKKNSQTSPQR. The tract at residues 1 to 20 is disordered; it reads MSKKNSQTSPQRQKMHVKKG.

The protein belongs to the universal ribosomal protein uL24 family. As to quaternary structure, part of the 50S ribosomal subunit.

Functionally, one of two assembly initiator proteins, it binds directly to the 5'-end of the 23S rRNA, where it nucleates assembly of the 50S subunit. Its function is as follows. One of the proteins that surrounds the polypeptide exit tunnel on the outside of the subunit. The protein is Large ribosomal subunit protein uL24 of Microcystis aeruginosa (strain NIES-843 / IAM M-2473).